We begin with the raw amino-acid sequence, 659 residues long: Putative pentatricopeptide repeat-containing protein At3g16890, mitochondrial (659 aa).

The transit peptide at 1–32 (MRGFASSASRIATAAAASKSLNASTSVNPKLS) directs the protein to the mitochondrion. PPR repeat units lie at residues 109–143 (DQSL…GYRI), 144–178 (SDEL…GMKP), 179–213 (STRL…GCKP), 214–248 (DRFT…GNRP), 249–283 (NVFT…KLNP), 284–318 (NEAT…DSNL), 319–353 (QRVG…GYIP), 354–388 (DSST…GVKP), 389–423 (GFNG…GLLS), 424–458 (SVYS…GISP), 459–493 (NLVT…GFKP), 494–528 (DVIT…GIEP), 529–563 (NEIT…GLSP), 564–598 (DLYA…GLKP), and 599–633 (DNFT…GCVP).

Belongs to the PPR family. P subfamily.

The protein localises to the mitochondrion. In terms of biological role, required for the ubiquinol-cytochrome c oxidoreductase activity of mitochondrial complex III. The polypeptide is Putative pentatricopeptide repeat-containing protein At3g16890, mitochondrial (PPR40) (Arabidopsis thaliana (Mouse-ear cress)).